The primary structure comprises 78 residues: Large ribosomal subunit protein bL28 (78 aa).

The tract at residues 1 to 31 (MAAHCQVTGAEPGFGHSISHSHRRNKRRFDP) is disordered.

Belongs to the bacterial ribosomal protein bL28 family.

The protein is Large ribosomal subunit protein bL28 of Paenarthrobacter aurescens (strain TC1).